Here is a 451-residue protein sequence, read N- to C-terminus: uncharacterized protein (451 aa).

Disordered regions lie at residues 89–150 (PRLS…ISRY) and 164–222 (QVGE…KTFG). Polar residues predominate over residues 104 to 121 (QKPTISRESFVWESSASI). A compositionally biased stretch (low complexity) spans 137 to 147 (SSTPSIEPESI). Over residues 175–222 (RAADSENERRPSEVREAPESRRRRETSETGSDKSKAPPPIKEIKKTFG) the composition is skewed to basic and acidic residues. The helical transmembrane segment at 358–376 (LIGLMLFQTTIFIISKIIA) threads the bilayer. Residues 401–451 (RNGSSSGFASGTSSPLVFIPRTKRPSLVPSEKKMRGPSVTRDLAAEQERDA) form a disordered region. Residues 403-414 (GSSSGFASGTSS) are compositionally biased toward low complexity.

This sequence belongs to the IIV-6 067R family.

It localises to the membrane. This is an uncharacterized protein from Invertebrate iridescent virus 3 (IIV-3).